The following is a 4834-amino-acid chain: E3 ubiquitin-protein ligase HERC2 (4834 aa).

The segment at 50-88 (TESTQNGELPPRKDDSVEPSGTKKEDLNDKEKKDEEETP) is disordered. A compositionally biased stretch (basic and acidic residues) spans 59 to 84 (PPRKDDSVEPSGTKKEDLNDKEKKDE). T272 carries the phosphothreonine modification. One copy of the RCC1 1-1 repeat lies at 415–461 (PTSHKGSLQEVIGWGLIGWKYYANVIGPIQCEGLANLGVTQIACAEK). Residues 462-512 (RFLILSRNGRVYTQAYNSDTLAPQLVQGLASRNIVKIAAHSDGHHYLALAA) form an RCC1 1-2 repeat. The RCC1 1-3 repeat unit spans residues 513–568 (TGEVYSWGCGDGGRLGHGDTVPLEEPKVISAFSGKQAGKHVVHIACGSTYSAAITA). One copy of the RCC1 1-4 repeat lies at 569–620 (EGELYTWGRGNYGRLGHGSSEDEAIPMLVAGLKGLKVIDVACGSGDAQTLAV). The RCC1 1-5 repeat unit spans residues 623–674 (NGQVWSWGDGDYGKLGRGGSDGCKTPKLIEKLQDLDVVKVRCGSQFSIALTK). The residue at position 647 (T647) is a Phosphothreonine. One copy of the RCC1 1-6 repeat lies at 675–726 (DGQVYSWGKGDNQRLGHGTEEHVRYPKLLEGLQGKKVIDVAAGSTHCLALTE). Residues 728 to 778 (SEVHSWGSNDQCQHFDTLRVTKPEPAALPGLDTKHIVGIACGPAQSFAWSS) form an RCC1 1-7 repeat. Residues 948 to 980 (LHAAITAEIQDIEAKKEAQKEKEIDEQEANAST) are a coiled coil. The Cytochrome b5 heme-binding domain occupies 1207–1283 (VTLIRKADLE…MHAFCVGQYL (77 aa)). Residues 1555–1575 (RKKRVPKKPESTDDEEKIGNE) form a disordered region. The segment covering 1566–1575 (TDDEEKIGNE) has biased composition (acidic residues). A Phosphoserine modification is found at S1577. The MIB/HERC2 domain maps to 1859 to 1932 (SGPELAAMMK…KYDLKLAELP (74 aa)). The interval 1933–1958 (AAAQPSAEDSDTEDDSEAEQTERNIH) is disordered. A compositionally biased stretch (acidic residues) spans 1940-1951 (EDSDTEDDSEAE). At S1942 the chain carries Phosphoserine. T1944 is modified (phosphothreonine). S2454 carries the post-translational modification Phosphoserine. In terms of domain architecture, CPH spans 2554 to 2630 (RADFLSNDDY…RYIHVELIGY (77 aa)). A ZZ-type zinc finger spans residues 2703 to 2755 (HPGVTCDGCQMFPINGSRFKCRNCDDFDFCETCFKTKKHNTRHTFGRINEPGQ). The Zn(2+) site is built by C2708, C2711, C2723, C2726, C2732, C2735, H2741, and H2745. Residues 2759–2936 (FCGRSGKQLK…ASDNEEEEDE (178 aa)) enclose the DOC domain. S2928 carries the phosphoserine modification. The RCC1 2-1 repeat unit spans residues 2958–3009 (RTKVFVWGLNDKDQLGGLKGSKIKVPSFSETLSALNVVQVAGGSKSLFAVTV). Residues 3010–3064 (EGKVYACGEATNGRLGLGISSGTVPIPRQITALSSYVVKKVAVHSGGRHATALTV) form an RCC1 2-2 repeat. An RCC1 2-3 repeat occupies 3065–3116 (DGKVFSWGEGDDGKLGHFSRMNCDKPRLIEALKTKRIRDIACGSSHSAALTS). The RCC1 2-4 repeat unit spans residues 3118 to 3168 (GELYTWGLGEYGRLGHGDNTTQLKPKMVKVLLGHRVIQVACGSRDAQTLAL). The RCC1 2-5 repeat unit spans residues 3171–3222 (EGLVFSWGDGDFGKLGRGGSEGCNIPQNIERLNGQGVCQIECGAQFSLALTK). Residues 3224-3274 (GVVWTWGKGDYFRLGHGSDVHVRKPQVVEGLRGKKIVHVAVGALHCLAVTD) form an RCC1 2-6 repeat. An RCC1 2-7 repeat occupies 3275-3326 (SGQVYAWGDNDHGQQGNGTTTVNRKPTLVQGLEGQKITRVACGSSHSVAWTT). Polar residues-rich tracts occupy residues 3602–3611 (SQSGRLSSQP) and 3618–3629 (HPYTDDTSTSGT). Positions 3602-3629 (SQSGRLSSQPVVVESSHPYTDDTSTSGT) are disordered. The stretch at 3951–4002 (SGTIYGWGHNHRGQLGGIEGAKVKVPTPCEALATLRPVQLIGGEQTLFAVTA) is one RCC1 3-1 repeat. An RCC1 3-2 repeat occupies 4004–4056 (GKLYATGYGAGGRLGIGGTESVSTPTLLESIQHVFIKKVAVNSGGKHCLALSS). One copy of the RCC1 3-3 repeat lies at 4058-4108 (GEVYSWGEAEDGKLGHGNRSPCDRPRVIESLRGIEVVDVAAGGAHSACVTA). The RCC1 3-4 repeat unit spans residues 4110–4162 (GDLYTWGKGRYGRLGHSDSEDQLKPKLVEALQGHRVVDIACGSGDAQTLCLTD). An RCC1 3-5 repeat occupies 4164–4214 (DTVWSWGDGDYGKLGRGGSDGCKVPMKIDSLTGLGVVKVECGSQFSVALTK). Residues 4216–4266 (GAVYTWGKGDYHRLGHGSDDHVRRPRQVQGLQGKKVIAIATGSLHCVCCTE) form an RCC1 3-6 repeat. The RCC1 3-7 repeat unit spans residues 4268-4318 (GEVYTWGDNDEGQLGDGTTNAIQRPRLVAALQGKKVNRVACGSAHTLAWST). In terms of domain architecture, HECT spans 4457-4794 (DSLLLPHRVW…IHFCKSIDTD (338 aa)). The active-site Glycyl thioester intermediate is C4762. Residues 4804–4834 (EPAADDSSDDSDNEDVDSFASDSTQDYLTGH) form a disordered region. Residues 4806–4820 (AADDSSDDSDNEDVD) are compositionally biased toward acidic residues. Residues S4810, S4811, and S4814 each carry the phosphoserine modification. The segment covering 4823–4834 (ASDSTQDYLTGH) has biased composition (polar residues). T4827 is subject to Phosphothreonine.

In terms of assembly, interacts (when phosphorylated at Thr-4827 and sumoylated) with RNF8 (via FHA domain); this interaction increases after ionizing radiation (IR) treatment. Interacts with XPA. Interacts with NEURL4. Via its interaction with NEURL4, may indirectly interact with CCP110 and CEP97. Post-translationally, phosphorylation at Thr-4827 is required for interaction with RNF8. Sumoylated with SUMO1 by PIAS4 in response to double-strand breaks (DSBs), promoting the interaction with RNF8.

It localises to the cytoplasm. The protein resides in the cytoskeleton. It is found in the microtubule organizing center. The protein localises to the centrosome. Its subcellular location is the centriole. It localises to the nucleus. The enzyme catalyses S-ubiquitinyl-[E2 ubiquitin-conjugating enzyme]-L-cysteine + [acceptor protein]-L-lysine = [E2 ubiquitin-conjugating enzyme]-L-cysteine + N(6)-ubiquitinyl-[acceptor protein]-L-lysine.. The protein operates within protein modification; protein ubiquitination. In terms of biological role, E3 ubiquitin-protein ligase that regulates ubiquitin-dependent retention of repair proteins on damaged chromosomes. Recruited to sites of DNA damage in response to ionizing radiation (IR) and facilitates the assembly of UBE2N and RNF8 promoting DNA damage-induced formation of 'Lys-63'-linked ubiquitin chains. Acts as a mediator of binding specificity between UBE2N and RNF8. Involved in the maintenance of RNF168 levels. E3 ubiquitin-protein ligase that promotes the ubiquitination and proteasomal degradation of XPA which influences the circadian oscillation of DNA excision repair activity. By controlling the steady-state expression of the IGF1R receptor, indirectly regulates the insulin-like growth factor receptor signaling pathway. Also modulates iron metabolism by regulating the basal turnover of FBXL5. The chain is E3 ubiquitin-protein ligase HERC2 from Homo sapiens (Human).